A 203-amino-acid chain; its full sequence is Outer-membrane lipoprotein carrier protein (203 aa).

The first 21 residues, 1 to 21 (MKKMAIACALLSSVVASSVWA), serve as a signal peptide directing secretion. Residues 178–203 (QQNGAVEPSKFTFTPPQGVTIDDQRK) form a disordered region.

Belongs to the LolA family. In terms of assembly, monomer.

Its subcellular location is the periplasm. Functionally, participates in the translocation of lipoproteins from the inner membrane to the outer membrane. Only forms a complex with a lipoprotein if the residue after the N-terminal Cys is not an aspartate (The Asp acts as a targeting signal to indicate that the lipoprotein should stay in the inner membrane). The chain is Outer-membrane lipoprotein carrier protein from Salmonella typhi.